The following is a 212-amino-acid chain: MVFEKIDKNSWNRKEYFDHYFASVPCTYSMTVKVDITQIKEKGMKLYPAMLYYIAMIVNRHSEFRTAINQDGELGIYDEMIPSYTIFHNDTETFSSLWTECKSDFKSFLADYESDTQRYGNNHRMEGKPNAPENIFNVSMIPWSTFDGFNLNLQKGYDYLIPIFTMGKIIKKDNKIILPLAIQVHHAVCDGFHICRFVNELQELIIVTQVCL.

Histidine 186 functions as the Proton acceptor in the catalytic mechanism.

The protein belongs to the chloramphenicol acetyltransferase family. As to quaternary structure, homotrimer.

The enzyme catalyses chloramphenicol + acetyl-CoA = chloramphenicol 3-acetate + CoA. Its function is as follows. This enzyme is an effector of chloramphenicol resistance in bacteria. The sequence is that of Chloramphenicol acetyltransferase (catD) from Clostridioides difficile (Peptoclostridium difficile).